The sequence spans 367 residues: Protein-glutamate methylesterase/protein-glutamine glutaminase 2 (367 aa).

A Response regulatory domain is found at 15 to 132 (RALIVDDSAL…SQSMHEMAEE (118 aa)). Aspartate 66 is subject to 4-aspartylphosphate. The CheB-type methylesterase domain occupies 172–367 (KTSVRNVLAI…MADEIVKIVR (196 aa)). Catalysis depends on residues serine 184, histidine 211, and aspartate 311.

It belongs to the CheB family. In terms of processing, phosphorylated by CheA. Phosphorylation of the N-terminal regulatory domain activates the methylesterase activity.

The protein localises to the cytoplasm. It carries out the reaction [protein]-L-glutamate 5-O-methyl ester + H2O = L-glutamyl-[protein] + methanol + H(+). The enzyme catalyses L-glutaminyl-[protein] + H2O = L-glutamyl-[protein] + NH4(+). In terms of biological role, involved in chemotaxis. Part of a chemotaxis signal transduction system that modulates chemotaxis in response to various stimuli. Catalyzes the demethylation of specific methylglutamate residues introduced into the chemoreceptors (methyl-accepting chemotaxis proteins or MCP) by CheR. Also mediates the irreversible deamidation of specific glutamine residues to glutamic acid. This chain is Protein-glutamate methylesterase/protein-glutamine glutaminase 2, found in Methanosarcina mazei (strain ATCC BAA-159 / DSM 3647 / Goe1 / Go1 / JCM 11833 / OCM 88) (Methanosarcina frisia).